The chain runs to 162 residues: RNA pyrophosphohydrolase (162 aa).

In terms of domain architecture, Nudix hydrolase spans 11–155 (PYRPCVGIVL…KRAVYEEVVA (145 aa)). The Nudix box signature appears at 45–66 (GGIDEGEKPREAALRELWEETG).

The protein belongs to the Nudix hydrolase family. RppH subfamily. The cofactor is a divalent metal cation.

In terms of biological role, accelerates the degradation of transcripts by removing pyrophosphate from the 5'-end of triphosphorylated RNA, leading to a more labile monophosphorylated state that can stimulate subsequent ribonuclease cleavage. In Cereibacter sphaeroides (strain ATCC 17029 / ATH 2.4.9) (Rhodobacter sphaeroides), this protein is RNA pyrophosphohydrolase.